We begin with the raw amino-acid sequence, 199 residues long: Dephospho-CoA kinase (199 aa).

The DPCK domain occupies 3-199; that stretch reads VLGLTGSIGM…AAARMPRRRP (197 aa). Residue 11–16 participates in ATP binding; the sequence is GMGKST.

Belongs to the CoaE family.

Its subcellular location is the cytoplasm. It carries out the reaction 3'-dephospho-CoA + ATP = ADP + CoA + H(+). It functions in the pathway cofactor biosynthesis; coenzyme A biosynthesis; CoA from (R)-pantothenate: step 5/5. Functionally, catalyzes the phosphorylation of the 3'-hydroxyl group of dephosphocoenzyme A to form coenzyme A. In Rhodopseudomonas palustris (strain HaA2), this protein is Dephospho-CoA kinase.